A 72-amino-acid polypeptide reads, in one-letter code: Guanine nucleotide-binding protein subunit gamma (72 aa).

The tract at residues 32-72 is disordered; that stretch reads MVSVAPPKANPSVSSKTKQQQHFKPGKATKDKATTKCCTIS. Cys-68 is lipidated: S-palmitoyl cysteine. Position 69 is a cysteine methyl ester (Cys-69). Cys-69 is lipidated: S-farnesyl cysteine. Residues 70-72 constitute a propeptide, removed in mature form; sequence TIS.

It belongs to the G protein gamma family. As to quaternary structure, g proteins are composed of 3 units, alpha, beta and gamma. Binding of the beta-gamma subunit complex (git5-git11) to the alpha subunit (gpa2) facilitates interaction with GPCR git3.

The protein resides in the cell membrane. In terms of biological role, gamma subunit of the heterotrimeric guanine nucleotide-binding protein (G protein) involved in glucose-induced cAMP signaling. The beta-gamma subunits (git5-git11) promote binding of the alpha subunit gpa2 to GPCR git3, which senses extracellular glucose, to activate cAMP-PKA signaling and repress sexual development and gluconeogenesis. This chain is Guanine nucleotide-binding protein subunit gamma (git11), found in Schizosaccharomyces pombe (strain 972 / ATCC 24843) (Fission yeast).